The sequence spans 141 residues: Nucleoside diphosphate kinase (141 aa).

Lys-11, Phe-59, Arg-87, Thr-93, Arg-104, and Asn-114 together coordinate ATP. His-117 acts as the Pros-phosphohistidine intermediate in catalysis.

This sequence belongs to the NDK family. As to quaternary structure, homotetramer. It depends on Mg(2+) as a cofactor.

It is found in the cytoplasm. The catalysed reaction is a 2'-deoxyribonucleoside 5'-diphosphate + ATP = a 2'-deoxyribonucleoside 5'-triphosphate + ADP. The enzyme catalyses a ribonucleoside 5'-diphosphate + ATP = a ribonucleoside 5'-triphosphate + ADP. In terms of biological role, major role in the synthesis of nucleoside triphosphates other than ATP. The ATP gamma phosphate is transferred to the NDP beta phosphate via a ping-pong mechanism, using a phosphorylated active-site intermediate. This chain is Nucleoside diphosphate kinase, found in Janthinobacterium sp. (strain Marseille) (Minibacterium massiliensis).